The chain runs to 1423 residues: Fructan beta-fructosidase (1423 aa).

The first 39 residues, 1 to 39 (MEEETVCKNWFMRKSGKSWIFGCAVFFVLGLATALPVAA), serve as a signal peptide directing secretion. The disordered stretch occupies residues 44–161 (QTTAADTAVT…TNLEDMSHDT (118 aa)). The segment covering 69 to 126 (AVTETTQSEGTASKQLTTPAVADQTTEPTDNEPISSSDGASSPYQVTDTTEPQQTLTP) has biased composition (polar residues). Substrate-binding positions include 455-458 (WAND), Gln-474, 513-514 (FS), 581-582 (RD), and Asp-783. Residue Asp-458 is part of the active site. Residues 867 to 871 (ASVEV) are involved in binding of sugars with beta-(2,6) linkages or binding of molecular weight fructans. The BIG2 domain occupies 924–1002 (PVAMNTTTAK…SKENPSLSKT (79 aa)). Residues 1368–1385 (DVNSVQQTEPSVMSSSPK) are compositionally biased toward polar residues. The disordered stretch occupies residues 1368–1394 (DVNSVQQTEPSVMSSSPKATLPDTGDH). An LPXTG sorting signal motif is present at residues 1388-1392 (LPDTG). A Pentaglycyl murein peptidoglycan amidated threonine modification is found at Thr-1391. Positions 1392-1423 (GDHKTDLSQLGVLAMIGSFLVEIAGYFKKRKD) are cleaved as a propeptide — removed by sortase.

The protein belongs to the glycosyl hydrolase 32 family.

Its subcellular location is the secreted. The protein resides in the cell wall. It carries out the reaction Hydrolysis of terminal, non-reducing (2-&gt;1)- and (2-&gt;6)-linked beta-D-fructofuranose residues in fructans.. In terms of biological role, this protein is a fructanase enzyme which degrades levans and inulins to fructose and also cleaves sucrose into glucose and fructose and can therefore function as an extracellular invertase. The sequence is that of Fructan beta-fructosidase (fruA) from Streptococcus mutans serotype c (strain ATCC 700610 / UA159).